Here is a 482-residue protein sequence, read N- to C-terminus: Adenylyltransferase and sulfurtransferase uba4 (482 aa).

A disordered region spans residues E33–S57. Residues A39 to R54 are compositionally biased toward polar residues. Residues G98, D119, S126–R130, K143, and D187–N188 each bind ATP. Zn(2+) is bound by residues C236 and C239. C253 functions as the Glycyl thioester intermediate; for adenylyltransferase activity in the catalytic mechanism. C315 and C318 together coordinate Zn(2+). One can recognise a Rhodanese domain in the interval A366 to P480. The active-site Cysteine persulfide intermediate; for sulfurtransferase activity is C435.

In the N-terminal section; belongs to the HesA/MoeB/ThiF family. UBA4 subfamily. Zn(2+) is required as a cofactor.

It localises to the cytoplasm. The protein resides in the cytosol. It carries out the reaction [molybdopterin-synthase sulfur-carrier protein]-C-terminal Gly-Gly + ATP + H(+) = [molybdopterin-synthase sulfur-carrier protein]-C-terminal Gly-Gly-AMP + diphosphate. The catalysed reaction is [molybdopterin-synthase sulfur-carrier protein]-C-terminal Gly-Gly-AMP + S-sulfanyl-L-cysteinyl-[cysteine desulfurase] + AH2 = [molybdopterin-synthase sulfur-carrier protein]-C-terminal-Gly-aminoethanethioate + L-cysteinyl-[cysteine desulfurase] + A + AMP + 2 H(+). The protein operates within tRNA modification; 5-methoxycarbonylmethyl-2-thiouridine-tRNA biosynthesis. It participates in cofactor biosynthesis; molybdopterin biosynthesis. In terms of biological role, plays a central role in 2-thiolation of mcm(5)S(2)U at tRNA wobble positions of cytosolic tRNA(Lys), tRNA(Glu) and tRNA(Gln). Also essential during biosynthesis of the molybdenum cofactor. Acts by mediating the C-terminal thiocarboxylation of sulfur carriers urm1 and mocs2a. Its N-terminus first activates urm1 and mocs2a as acyl-adenylates (-COAMP), then the persulfide sulfur on the catalytic cysteine is transferred to urm1 and mocs2a to form thiocarboxylation (-COSH) of their C-terminus. The reaction probably involves hydrogen sulfide that is generated from the persulfide intermediate and that acts as a nucleophile towards urm1 and mocs2a. Subsequently, a transient disulfide bond is formed. Does not use thiosulfate as sulfur donor; nfs1 probably acting as a sulfur donor for thiocarboxylation reactions. The chain is Adenylyltransferase and sulfurtransferase uba4 from Emericella nidulans (strain FGSC A4 / ATCC 38163 / CBS 112.46 / NRRL 194 / M139) (Aspergillus nidulans).